The primary structure comprises 248 residues: Flavodoxin/ferredoxin--NADP reductase (248 aa).

The region spanning 2–101 (ADWVTGKVTK…SEAAGFFVLD (100 aa)) is the FAD-binding FR-type domain. NADP(+) is bound at residue D17. FAD contacts are provided by residues 50 to 53 (RAYS), Y66, 74 to 76 (KLS), and T116. NADP(+) contacts are provided by residues 143–144 (AR), 173–174 (SR), R184, 214–216 (NPQ), and D220. 247–248 (YW) is an FAD binding site.

It belongs to the ferredoxin--NADP reductase type 1 family. In terms of assembly, monomer. It depends on FAD as a cofactor.

The protein resides in the cytoplasm. The enzyme catalyses 2 reduced [2Fe-2S]-[ferredoxin] + NADP(+) + H(+) = 2 oxidized [2Fe-2S]-[ferredoxin] + NADPH. It catalyses the reaction reduced [flavodoxin] + NADP(+) = oxidized [flavodoxin] + NADPH + 2 H(+). Functionally, transports electrons between flavodoxin or ferredoxin and NADPH. Reduces flavodoxin 1, flavodoxin 2 and ferredoxin, ferredoxin being the kinetically and thermodynamically preferred partner. Required for the activation of several enzymes such as pyruvate formate-lyase, anaerobic ribonucleotide reductase and cobalamin-dependent methionine synthase. The polypeptide is Flavodoxin/ferredoxin--NADP reductase (Escherichia coli (strain K12)).